We begin with the raw amino-acid sequence, 882 residues long: Translation initiation factor IF-2 (882 aa).

The segment at serine 50–valine 299 is disordered. 2 stretches are compositionally biased toward basic and acidic residues: residues serine 60–lysine 71 and arginine 84–histidine 96. Over residues glycine 97–lysine 108 the composition is skewed to basic residues. Basic and acidic residues-rich tracts occupy residues glutamine 109–asparagine 133, lysine 169–glutamate 183, glutamine 232–lysine 242, and glutamate 250–aspartate 263. Residues lysine 264–asparagine 277 show a composition bias toward basic residues. Over residues glutamine 278 to leucine 294 the composition is skewed to basic and acidic residues. The 170-residue stretch at lysine 383–lysine 552 folds into the tr-type G domain. Positions glycine 392–threonine 399 are G1. Position 392 to 399 (glycine 392 to threonine 399) interacts with GTP. The G2 stretch occupies residues glycine 417–lysine 421. The tract at residues aspartate 438–glycine 441 is G3. Residues aspartate 438–histidine 442 and asparagine 492–aspartate 495 contribute to the GTP site. A G4 region spans residues asparagine 492–aspartate 495. Residues serine 528 to lysine 530 form a G5 region.

Belongs to the TRAFAC class translation factor GTPase superfamily. Classic translation factor GTPase family. IF-2 subfamily.

Its subcellular location is the cytoplasm. Functionally, one of the essential components for the initiation of protein synthesis. Protects formylmethionyl-tRNA from spontaneous hydrolysis and promotes its binding to the 30S ribosomal subunits. Also involved in the hydrolysis of GTP during the formation of the 70S ribosomal complex. The protein is Translation initiation factor IF-2 of Lactobacillus gasseri (strain ATCC 33323 / DSM 20243 / BCRC 14619 / CIP 102991 / JCM 1131 / KCTC 3163 / NCIMB 11718 / NCTC 13722 / AM63).